A 504-amino-acid polypeptide reads, in one-letter code: Trifunctional (S)-stylopine synthase/(S)-nandinine synthase/(S)-canadine synthase (504 aa).

Residues 16 to 36 (SSTTTTTTILLSLLFTIFIIL) traverse the membrane as a helical segment. C448 is a binding site for heme.

This sequence belongs to the cytochrome P450 family. It depends on heme as a cofactor. As to expression, expressed in roots and at lower levels in stems, leaves and plantlets.

The protein localises to the endoplasmic reticulum membrane. It carries out the reaction (S)-cheilanthifoline + reduced [NADPH--hemoprotein reductase] + O2 = (S)-stylopine + oxidized [NADPH--hemoprotein reductase] + 2 H2O + H(+). The enzyme catalyses (S)-tetrahydrocolumbamine + reduced [NADPH--hemoprotein reductase] + O2 = (S)-canadine + oxidized [NADPH--hemoprotein reductase] + 2 H2O + H(+). The catalysed reaction is (S)-scoulerine + reduced [NADPH--hemoprotein reductase] + O2 = (S)-nandinine + oxidized [NADPH--hemoprotein reductase] + 2 H2O + H(+). Its function is as follows. Methylenedioxy bridge-forming cytochrome P450 involved in the biosynthesis of isoquinoline alkaloids. Converts (S)-cheilanthifoline to (S)-stylopine, (S)-scoulerine to (S)-nandinine and (S)-tetrahydrocolumbamine to (S)-canadine. Can be involved in both sanguinarine and berberine biosynthesis. Catalyzes an oxidative reaction that does not incorporate oxygen into the product. In Argemone mexicana (Mexican prickly poppy), this protein is Trifunctional (S)-stylopine synthase/(S)-nandinine synthase/(S)-canadine synthase.